The primary structure comprises 547 residues: Chaperonin GroEL (547 aa).

ATP-binding positions include 30–33 (TLGP), 87–91 (DGTTT), Gly414, 478–480 (DAL), and Asp494.

The protein belongs to the chaperonin (HSP60) family. As to quaternary structure, forms a cylinder of 14 subunits composed of two heptameric rings stacked back-to-back. Interacts with the co-chaperonin GroES.

It is found in the cytoplasm. The catalysed reaction is ATP + H2O + a folded polypeptide = ADP + phosphate + an unfolded polypeptide.. Its function is as follows. Together with its co-chaperonin GroES, plays an essential role in assisting protein folding. The GroEL-GroES system forms a nano-cage that allows encapsulation of the non-native substrate proteins and provides a physical environment optimized to promote and accelerate protein folding. The sequence is that of Chaperonin GroEL from Desulforudis audaxviator (strain MP104C).